Reading from the N-terminus, the 118-residue chain is Ribosome-binding factor A (118 aa).

Belongs to the RbfA family. As to quaternary structure, monomer. Binds 30S ribosomal subunits, but not 50S ribosomal subunits or 70S ribosomes.

Its subcellular location is the cytoplasm. In terms of biological role, one of several proteins that assist in the late maturation steps of the functional core of the 30S ribosomal subunit. Associates with free 30S ribosomal subunits (but not with 30S subunits that are part of 70S ribosomes or polysomes). Required for efficient processing of 16S rRNA. May interact with the 5'-terminal helix region of 16S rRNA. This chain is Ribosome-binding factor A, found in Bacillus cereus (strain AH187).